A 329-amino-acid chain; its full sequence is Malate dehydrogenase 2 (329 aa).

NAD(+) is bound at residue G12 to A18. Positions 93 and 99 each coordinate substrate. Residues N106, Q113, and V130–N132 each bind NAD(+). Positions 132 and 163 each coordinate substrate. Residue H188 is the Proton acceptor of the active site.

The protein belongs to the LDH/MDH superfamily. MDH type 2 family.

It catalyses the reaction (S)-malate + NAD(+) = oxaloacetate + NADH + H(+). Catalyzes the reversible oxidation of malate to oxaloacetate. The chain is Malate dehydrogenase 2 from Burkholderia thailandensis (strain ATCC 700388 / DSM 13276 / CCUG 48851 / CIP 106301 / E264).